The sequence spans 79 residues: D-alanyl carrier protein (79 aa).

Residues 1 to 76 (MKEQIFDIIE…KIAARVQEKK (76 aa)) enclose the Carrier domain. Position 34 is an O-(pantetheine 4'-phosphoryl)serine (Ser-34).

It belongs to the DltC family. Post-translationally, 4'-phosphopantetheine is transferred from CoA to a specific serine of apo-DCP.

Its subcellular location is the cytoplasm. The protein operates within cell wall biogenesis; lipoteichoic acid biosynthesis. Its function is as follows. Carrier protein involved in the D-alanylation of lipoteichoic acid (LTA). The loading of thioester-linked D-alanine onto DltC is catalyzed by D-alanine--D-alanyl carrier protein ligase DltA. The DltC-carried D-alanyl group is further transferred to cell membrane phosphatidylglycerol (PG) by forming an ester bond, probably catalyzed by DltD. D-alanylation of LTA plays an important role in modulating the properties of the cell wall in Gram-positive bacteria, influencing the net charge of the cell wall. The polypeptide is D-alanyl carrier protein (Lactococcus lactis subsp. lactis (strain IL1403) (Streptococcus lactis)).